Here is a 166-residue protein sequence, read N- to C-terminus: Peptide deformylase (166 aa).

Positions 88 and 130 each coordinate Fe cation. Glutamate 131 is a catalytic residue. Fe cation is bound at residue histidine 134.

The protein belongs to the polypeptide deformylase family. The cofactor is Fe(2+).

The enzyme catalyses N-terminal N-formyl-L-methionyl-[peptide] + H2O = N-terminal L-methionyl-[peptide] + formate. Removes the formyl group from the N-terminal Met of newly synthesized proteins. Requires at least a dipeptide for an efficient rate of reaction. N-terminal L-methionine is a prerequisite for activity but the enzyme has broad specificity at other positions. This Thermoanaerobacter sp. (strain X514) protein is Peptide deformylase.